Reading from the N-terminus, the 200-residue chain is Chromophore lyase CpcT/CpeT 2 (200 aa).

This sequence belongs to the CpcT/CpeT biliprotein lyase family.

In terms of biological role, covalently attaches a chromophore to Cys residue(s) of phycobiliproteins. This Microcystis aeruginosa (strain NIES-843 / IAM M-2473) protein is Chromophore lyase CpcT/CpeT 2.